Reading from the N-terminus, the 322-residue chain is tRNA U34 carboxymethyltransferase (322 aa).

Residues K92, W106, K111, G131, D153–S155, V181–E182, M196, Y200, and R315 each bind carboxy-S-adenosyl-L-methionine.

The protein belongs to the class I-like SAM-binding methyltransferase superfamily. CmoB family. As to quaternary structure, homotetramer.

It catalyses the reaction carboxy-S-adenosyl-L-methionine + 5-hydroxyuridine(34) in tRNA = 5-carboxymethoxyuridine(34) in tRNA + S-adenosyl-L-homocysteine + H(+). In terms of biological role, catalyzes carboxymethyl transfer from carboxy-S-adenosyl-L-methionine (Cx-SAM) to 5-hydroxyuridine (ho5U) to form 5-carboxymethoxyuridine (cmo5U) at position 34 in tRNAs. This Pseudoalteromonas translucida (strain TAC 125) protein is tRNA U34 carboxymethyltransferase.